The chain runs to 318 residues: NADH-ubiquinone oxidoreductase chain 1 (318 aa).

The next 8 membrane-spanning stretches (helical) occupy residues 2-22, 69-89, 100-120, 146-166, 171-191, 222-242, 253-273, and 294-314; these read PVIN…FLML, ILYI…WTPL, LGLL…LWSG, LALI…STLI, HSWL…STLA, LFFM…AMIF, ELHT…FLWI, and LPLT…TSGI.

The protein belongs to the complex I subunit 1 family. Core subunit of respiratory chain NADH dehydrogenase (Complex I) which is composed of 45 different subunits.

It localises to the mitochondrion inner membrane. It catalyses the reaction a ubiquinone + NADH + 5 H(+)(in) = a ubiquinol + NAD(+) + 4 H(+)(out). Functionally, core subunit of the mitochondrial membrane respiratory chain NADH dehydrogenase (Complex I) which catalyzes electron transfer from NADH through the respiratory chain, using ubiquinone as an electron acceptor. Essential for the catalytic activity and assembly of complex I. This Pongo pygmaeus (Bornean orangutan) protein is NADH-ubiquinone oxidoreductase chain 1 (MT-ND1).